The chain runs to 48 residues: 2-deoxy-glucose resistant protein 1, mitochondrial (48 aa).

The transit peptide at 1 to 28 (MQVGFVSQTNCRSFPACIVFLFQMSQRQ) directs the protein to the mitochondrion.

It localises to the mitochondrion. The polypeptide is 2-deoxy-glucose resistant protein 1, mitochondrial (DGR1) (Saccharomyces cerevisiae (strain ATCC 204508 / S288c) (Baker's yeast)).